The sequence spans 130 residues: MCLIGVEGNLFQFARLIDAKQEAFSFFKYISYGCYCGWGGQGTPKDATDRCCFVHDCCYARVKGCNPKLVEYSYSYRTGKIVCGGDDPCLRAVCECDRVAAICFRENMNTYDKKYMLYSIFDCKEESDQC.

Positions 1 to 8 (MCLIGVEG) are cleaved as a signal peptide. 7 disulfide bridges follow: Cys-34–Cys-123, Cys-36–Cys-52, Cys-51–Cys-103, Cys-57–Cys-130, Cys-58–Cys-96, Cys-65–Cys-89, and Cys-83–Cys-94. Ca(2+) contacts are provided by Tyr-35, Gly-37, and Gly-39. Residue His-55 is part of the active site. Residue Asp-56 coordinates Ca(2+). The active site involves Asp-97.

The protein belongs to the phospholipase A2 family. Group II subfamily. D49 sub-subfamily. As to quaternary structure, heterodimer of an acidic protein having phospholipase A2 activity (B chain) and an A chain which weakly inhibits the B chain enzymatic activity but potentiates its lethal potency. It depends on Ca(2+) as a cofactor. Expressed by the venom gland.

The protein resides in the secreted. The catalysed reaction is a 1,2-diacyl-sn-glycero-3-phosphocholine + H2O = a 1-acyl-sn-glycero-3-phosphocholine + a fatty acid + H(+). Monomer: Snake venom phospholipase A2 (PLA2) that shows a high PLA2 activity (2110 umol/min/mg). Its function is as follows. Heterodimer (A and B chains): snake venom phospholipase A2 that shows a moderate PLA2 activity (1377 umol/min/mg). Acts as a presynaptic neurotoxin. In vivo, induces edema and produces neurotoxic symptoms in mice. It exhibits indirect hemolysis and a strong myonecrotic activity and is cytotoxic. PLA2 catalyzes the calcium-dependent hydrolysis of the 2-acyl groups in 3-sn-phosphoglycerides. This Daboia siamensis (Eastern Russel's viper) protein is Acidic phospholipase A2 daboiatoxin B chain.